A 169-amino-acid chain; its full sequence is Lutropin/choriogonadotropin subunit beta (169 aa).

A signal peptide spans 1–20; the sequence is METLQGLLLWMLLSVGGVWA. Cystine bridges form between C29/C77, C43/C92, C46/C130, C54/C108, C58/C110, and C113/C120. N33 carries N-linked (GlcNAc...) asparagine glycosylation. A disordered region spans residues 131–169; that stretch reads APQASSSSKDPPSQPLTSTSTPTPGASRRSSHPLPIKTS. 2 O-linked (GalNAc...) serine glycosylation sites follow: S138 and S143. A compositionally biased stretch (low complexity) spans 145 to 158; it reads PLTSTSTPTPGASR. T147 carries an O-linked (GalNAc...) threonine glycan. The O-linked (GalNAc...) serine glycan is linked to S148. Residue T149 is glycosylated (O-linked (GalNAc...) threonine). An O-linked (GalNAc...) serine glycan is attached at S150. 2 O-linked (GalNAc...) threonine glycosylation sites follow: T151 and T153. O-linked (GalNAc...) serine glycosylation is found at S157, S160, S161, and S169.

This sequence belongs to the glycoprotein hormones subunit beta family. As to quaternary structure, heterodimer of a common alpha chain and a unique beta chain which confers biological specificity to thyrotropin, lutropin, follitropin and gonadotropin. Post-translationally, microheterogeneity at Asn-33. O-glycosylation appears to be responsible for the beta subunit contribution to the difference in LH-receptor binding activity between LSH-B and CG-B.

Its subcellular location is the secreted. In terms of biological role, promotes spermatogenesis and ovulation by stimulating the testes and ovaries to synthesize steroids. The polypeptide is Lutropin/choriogonadotropin subunit beta (LHB) (Equus caballus (Horse)).